Reading from the N-terminus, the 162-residue chain is Transcription antitermination protein NusB (162 aa).

Belongs to the NusB family.

In terms of biological role, involved in transcription antitermination. Required for transcription of ribosomal RNA (rRNA) genes. Binds specifically to the boxA antiterminator sequence of the ribosomal RNA (rrn) operons. This is Transcription antitermination protein NusB from Xanthomonas euvesicatoria pv. vesicatoria (strain 85-10) (Xanthomonas campestris pv. vesicatoria).